A 216-amino-acid chain; its full sequence is Octanoyltransferase (216 aa).

Residues 35–213 (NSNPDFIWIG…IIQEEFNFDF (179 aa)) enclose the BPL/LPL catalytic domain. Substrate contacts are provided by residues 77 to 84 (RGGEVTCH), 144 to 146 (SIG), and 157 to 159 (GFS). The active-site Acyl-thioester intermediate is the C175.

This sequence belongs to the LipB family.

Its subcellular location is the cytoplasm. The catalysed reaction is octanoyl-[ACP] + L-lysyl-[protein] = N(6)-octanoyl-L-lysyl-[protein] + holo-[ACP] + H(+). It participates in protein modification; protein lipoylation via endogenous pathway; protein N(6)-(lipoyl)lysine from octanoyl-[acyl-carrier-protein]: step 1/2. Its function is as follows. Catalyzes the transfer of endogenously produced octanoic acid from octanoyl-acyl-carrier-protein onto the lipoyl domains of lipoate-dependent enzymes. Lipoyl-ACP can also act as a substrate although octanoyl-ACP is likely to be the physiological substrate. The protein is Octanoyltransferase of Prochlorococcus marinus (strain MIT 9215).